The sequence spans 222 residues: Triosephosphate isomerase (222 aa).

9-11 contacts substrate; the sequence is NYK. The Electrophile role is filled by His93. The active-site Proton acceptor is Glu141. Residues Ile146, Gly181, and 202 to 203 contribute to the substrate site; that span reads AS.

Belongs to the triosephosphate isomerase family. In terms of assembly, homotetramer; dimer of dimers.

Its subcellular location is the cytoplasm. It carries out the reaction D-glyceraldehyde 3-phosphate = dihydroxyacetone phosphate. It functions in the pathway carbohydrate biosynthesis; gluconeogenesis. The protein operates within carbohydrate degradation; glycolysis; D-glyceraldehyde 3-phosphate from glycerone phosphate: step 1/1. Its function is as follows. Involved in the gluconeogenesis. Catalyzes stereospecifically the conversion of dihydroxyacetone phosphate (DHAP) to D-glyceraldehyde-3-phosphate (G3P). The sequence is that of Triosephosphate isomerase from Methanobrevibacter smithii (strain ATCC 35061 / DSM 861 / OCM 144 / PS).